The chain runs to 76 residues: DNA-directed RNA polymerase subunit omega (76 aa).

This sequence belongs to the RNA polymerase subunit omega family. In cyanobacteria the RNAP catalytic core is composed of 2 alpha, 1 beta, 1 beta', 1 gamma and 1 omega subunit. When a sigma factor is associated with the core the holoenzyme is formed, which can initiate transcription.

It catalyses the reaction RNA(n) + a ribonucleoside 5'-triphosphate = RNA(n+1) + diphosphate. Functionally, promotes RNA polymerase assembly. Latches the N- and C-terminal regions of the beta' subunit thereby facilitating its interaction with the beta and alpha subunits. In Synechocystis sp. (strain ATCC 27184 / PCC 6803 / Kazusa), this protein is DNA-directed RNA polymerase subunit omega (rpoZ).